Here is a 325-residue protein sequence, read N- to C-terminus: Structure-specific endonuclease subunit SLX1 (325 aa).

The GIY-YIG domain maps to 10-92 (ALYTVYILRS…NNPHLSMHIP (83 aa)). The SLX1-type zinc finger occupies 230–284 (CVVCREEMKSGEGLHAVCTHEGCDGVGHISCWSRSFLKNNDTGSILPVQGQCPMC).

Belongs to the SLX1 family. As to quaternary structure, forms a heterodimer with SLX4. The cofactor is a divalent metal cation.

It is found in the nucleus. Catalytic subunit of the SLX1-SLX4 structure-specific endonuclease that resolves DNA secondary structures generated during DNA repair and recombination. Has endonuclease activity towards branched DNA substrates, introducing single-strand cuts in duplex DNA close to junctions with ss-DNA. The sequence is that of Structure-specific endonuclease subunit SLX1 from Chaetomium globosum (strain ATCC 6205 / CBS 148.51 / DSM 1962 / NBRC 6347 / NRRL 1970) (Soil fungus).